Reading from the N-terminus, the 173-residue chain is Peptidoglycan-associated lipoprotein (173 aa).

An N-terminal signal peptide occupies residues 1–21 (MKSKKIFKILTLLLPMITTFS). Cysteine 22 is lipidated: N-palmitoyl cysteine. The S-diacylglycerol cysteine moiety is linked to residue cysteine 22. The OmpA-like domain occupies 59–173 (ETLEKLKKGN…KNRRSVIIYQ (115 aa)).

The protein belongs to the Pal lipoprotein family.

The protein resides in the cell outer membrane. This chain is Peptidoglycan-associated lipoprotein, found in Buchnera aphidicola subsp. Baizongia pistaciae (strain Bp).